Reading from the N-terminus, the 322-residue chain is Protein lin-56 (322 aa).

The tract at residues S264–A322 is disordered. Residues E275–Y304 show a composition bias toward basic and acidic residues.

As to expression, widely expressed throughout embryonic development. Expressed in the six multipotent ventral ectodermal blast cells, P3.p-P8.p, which generate the vulva and in their descendants throughout vulval development.

Its subcellular location is the nucleus. Its function is as follows. Required for translation, stability and/or localization of lin-15a. The polypeptide is Protein lin-56 (lin-56) (Caenorhabditis elegans).